The chain runs to 296 residues: Cleavage and polyadenylation specificity factor subunit 4 (296 aa).

C3H1-type zinc fingers lie at residues 35 to 63 (KSIA…RHIR), 64 to 91 (GDRT…HEYD), 92 to 119 (MTKM…HIDP), 120 to 147 (QSKV…HLRR), and 149 to 171 (LCMD…HPHF). Residues 189–206 (PTCHYCGELGHKANSCKQ) form a CCHC-type 1 zinc finger. The disordered stretch occupies residues 222–254 (HSGGHSGGYSGHSGHIEGADDMQSNHHSQPHGP). The CCHC-type 2 zinc finger occupies 266–283 (ITCYKCGNKGHYANKCPK).

In terms of assembly, component of the cleavage and polyadenylation specificity factor (CPSF) complex, composed of at least Clp, Cpsf73, Cpsf100 and Cpsf160. As to expression, during oogenesis, expression is detected in the germarium, in nurse cells, in the oocyte, and in the somatically derived follicular epithelial cells (at protein level). At oogenesis stage 12, nurse cells degenerate and their content is transferred into the oocyte. In larvae, expressed in all organs and disks (at protein level). In the larval salivary gland, expression is initially confined to cells at the anterior end but later expands throughout the entire gland (at protein level).

The protein localises to the nucleus. Functionally, component of the cleavage and polyadenylation specificity factor (CPSF) complex that plays a key role in pre-mRNA 3'-end formation, recognizing the AAUAAA signal sequence and interacting with poly(A) polymerase and other factors to bring about cleavage and poly(A) addition. Has endonuclease activity. Binds RNA polymers with a preference for G- and/or C-rich clusters. Binds single-stranded DNA non-specifically. This chain is Cleavage and polyadenylation specificity factor subunit 4 (Clp), found in Drosophila melanogaster (Fruit fly).